A 191-amino-acid polypeptide reads, in one-letter code: Elongation factor P (191 aa).

It belongs to the elongation factor P family.

The protein localises to the cytoplasm. Its pathway is protein biosynthesis; polypeptide chain elongation. Involved in peptide bond synthesis. Stimulates efficient translation and peptide-bond synthesis on native or reconstituted 70S ribosomes in vitro. Probably functions indirectly by altering the affinity of the ribosome for aminoacyl-tRNA, thus increasing their reactivity as acceptors for peptidyl transferase. The protein is Elongation factor P of Ralstonia pickettii (strain 12J).